We begin with the raw amino-acid sequence, 290 residues long: MQGRIVKSLAGFYYVESDGVVYQTRARGNFRKKGQIPYVGDWVEFSSQDQSEGYILSIEERKNSLVRPPIVNIDQAVVIMSAKEPDFNANLLDRFLVLLEYKMIQPIIYISKLDLLDDLVVIDDIREHYQNIGYVFCYSQEELLPLLANKVTVFMGQTGVGKSTLLNKIAPELKLETGEISGSLGRGRHTTRAVSFYNVHKGKIADTPGFSSLDYEVDNAEDLNESFPELRRLSHFCKFRSCTHTHEPKCAVKEALTQGQLWQVRYDNYLQFLSEIESRRETYKKVIKRK.

Residues 62–213 form the CP-type G domain; that stretch reads KNSLVRPPIV…IADTPGFSSL (152 aa). GTP is bound by residues 111 to 114 and 156 to 164; these read SKLD and GQTGVGKST. The Zn(2+) site is built by Cys-237, Cys-242, His-244, and Cys-250.

The protein belongs to the TRAFAC class YlqF/YawG GTPase family. RsgA subfamily. In terms of assembly, monomer. Associates with 30S ribosomal subunit, binds 16S rRNA. Zn(2+) is required as a cofactor.

The protein localises to the cytoplasm. In terms of biological role, one of several proteins that assist in the late maturation steps of the functional core of the 30S ribosomal subunit. Helps release RbfA from mature subunits. May play a role in the assembly of ribosomal proteins into the subunit. Circularly permuted GTPase that catalyzes slow GTP hydrolysis, GTPase activity is stimulated by the 30S ribosomal subunit. The protein is Small ribosomal subunit biogenesis GTPase RsgA of Streptococcus agalactiae serotype V (strain ATCC BAA-611 / 2603 V/R).